Reading from the N-terminus, the 205-residue chain is Polyamine-modulated factor 1 (205 aa).

The disordered stretch occupies residues 1 to 28; sequence MAEASSVNVGSGCAEKGPEELSQEPARP. Positions 140 to 190 form a coiled coil; that stretch reads YLLQQRDALQRRVQRQEAENRQLADAVLAGRRQLEELQLQAQARQQAWQAL.

Component of the MIS12 complex composed of MIS12, DSN1, NSL1 and PMF1. Interacts with COPS7A. Interacts via its coiled-coil domain with the leucine-zipper domain of NFE2L2. The interaction with NFE2L2 is required for the transcriptional regulation of SSAT.

The protein localises to the nucleus. It is found in the chromosome. The protein resides in the centromere. It localises to the kinetochore. Its function is as follows. Part of the MIS12 complex which is required for normal chromosome alignment and segregation and kinetochore formation during mitosis. May act as a cotranscription partner of NFE2L2 involved in regulation of polyamine-induced transcription of SSAT. This chain is Polyamine-modulated factor 1 (PMF1), found in Bos taurus (Bovine).